The chain runs to 326 residues: Pyruvate dehydrogenase E1 component subunit alpha (326 aa).

In terms of assembly, heterodimer of an alpha and a beta chain. It depends on thiamine diphosphate as a cofactor.

It catalyses the reaction N(6)-[(R)-lipoyl]-L-lysyl-[protein] + pyruvate + H(+) = N(6)-[(R)-S(8)-acetyldihydrolipoyl]-L-lysyl-[protein] + CO2. The pyruvate dehydrogenase complex catalyzes the overall conversion of pyruvate to acetyl-CoA and CO(2). It contains multiple copies of three enzymatic components: pyruvate dehydrogenase (E1), dihydrolipoamide acetyltransferase (E2) and lipoamide dehydrogenase (E3). This is Pyruvate dehydrogenase E1 component subunit alpha (pdhA) from Rickettsia felis (strain ATCC VR-1525 / URRWXCal2) (Rickettsia azadi).